The following is a 168-amino-acid chain: MSFDELPKSDGYQEKLVSVTRTAKVVKGGRVFGFAVLVVVGDGKGKVGFGRGKAREVPIAIQKAMDQAKKNMVYIPLSGTTIFHEITWNYGASKVFMKPASEGTGIIAGGAMRAVLEVLGVQNILAKSIGSTNPSNIVRATIGALTHIGTPDYVAAKRGKTVEEVMAG.

One can recognise an S5 DRBM domain in the interval 12 to 75 (YQEKLVSVTR…DQAKKNMVYI (64 aa)).

This sequence belongs to the universal ribosomal protein uS5 family. In terms of assembly, part of the 30S ribosomal subunit. Contacts proteins S4 and S8.

With S4 and S12 plays an important role in translational accuracy. Functionally, located at the back of the 30S subunit body where it stabilizes the conformation of the head with respect to the body. The polypeptide is Small ribosomal subunit protein uS5 (Legionella pneumophila (strain Paris)).